The primary structure comprises 54 residues: Ovomucoid (54 aa).

Positions 4 to 54 (VDCSGYPQSACPQDYVPFCGSDNKTYSNKCNFCNAVADSNGTLTLSHFGKC) constitute a Kazal-like domain. 3 disulfide bridges follow: cysteine 6–cysteine 36, cysteine 14–cysteine 33, and cysteine 22–cysteine 54. N-linked (GlcNAc...) asparagine glycosylation is present at asparagine 43.

It localises to the secreted. This Gallirallus australis (Weka) protein is Ovomucoid.